Here is a 558-residue protein sequence, read N- to C-terminus: Membrane protein insertase YidC (558 aa).

5 helical membrane passes run 6-26 (SFFIIVFLIVSFILWKIWDDE), 359-379 (FIHTYTIDNWGISIILITVII), 434-454 (LGGCLPLLIQMPIFLALYYML), 480-500 (ILPIIMGITMFFIQKLSPTTI), and 513-533 (LVIFTIFFLWFPSGLVLYYII).

This sequence belongs to the OXA1/ALB3/YidC family. Type 1 subfamily. Interacts with the Sec translocase complex via SecD. Specifically interacts with transmembrane segments of nascent integral membrane proteins during membrane integration.

The protein localises to the cell inner membrane. In terms of biological role, required for the insertion and/or proper folding and/or complex formation of integral membrane proteins into the membrane. Involved in integration of membrane proteins that insert both dependently and independently of the Sec translocase complex, as well as at least some lipoproteins. Aids folding of multispanning membrane proteins. This Blochmanniella floridana protein is Membrane protein insertase YidC.